Consider the following 2099-residue polypeptide: Dedicator of cytokinesis protein 8 (2099 aa).

Residues serine 20, serine 139, and serine 451 each carry the phosphoserine modification. The C2 DOCK-type domain maps to 560–729 (RNLLYVYPQR…GVFNIEVQAV (170 aa)). A phosphoserine mark is found at serine 904, serine 936, serine 1145, and serine 1243. The region spanning 1632–2066 (KSYQASPDLR…LRPMIERKIP (435 aa)) is the DOCKER domain. At serine 2087 the chain carries Phosphoserine.

This sequence belongs to the DOCK family. As to quaternary structure, interacts (via DOCKER domain) with GTPase CDC42; the interaction activates CDC42 by exchanging GDP for GTP. The unphosphorylated form interacts (via DOCKER domain) with LRCH1 (via LRR repeats); the interaction prevents the association between DOCK8 and CDC42. Interacts with CCDC88B. In response to chemokine CXCL12/SDF-1-alpha stimulation, phosphorylated by PRKCA/PKC-alpha which promotes DOCK8 dissociation from LRCH1. As to expression, expressed in peripheral blood mononuclear cells (PBMCs).

It localises to the cytoplasm. The protein resides in the cell membrane. It is found in the cell projection. Its subcellular location is the lamellipodium membrane. Functionally, guanine nucleotide exchange factor (GEF) which specifically activates small GTPase CDC42 by exchanging bound GDP for free GTP. During immune responses, required for interstitial dendritic cell (DC) migration by locally activating CDC42 at the leading edge membrane of DC. Required for CD4(+) T-cell migration in response to chemokine stimulation by promoting CDC42 activation at T cell leading edge membrane. Is involved in NK cell cytotoxicity by controlling polarization of microtubule-organizing center (MTOC), and possibly regulating CCDC88B-mediated lytic granule transport to MTOC during cell killing. The sequence is that of Dedicator of cytokinesis protein 8 (DOCK8) from Homo sapiens (Human).